We begin with the raw amino-acid sequence, 240 residues long: Oxygen-insensitive NADPH nitroreductase (240 aa).

FMN contacts are provided by residues 11-15 (HRSIR), serine 39, glutamine 67, 128-131 (YIGG), and 167-169 (KPR).

The protein belongs to the flavin oxidoreductase frp family. Homodimer. FMN serves as cofactor.

Catalyzes the reduction of nitroaromatic compounds using NADPH. Has a broad electron acceptor specificity. Reduces nitrofurazone by a ping-pong bi-bi mechanism possibly to generate a two-electron transfer product. Major oxygen-insensitive nitroreductase in E.coli. This Escherichia coli (strain K12) protein is Oxygen-insensitive NADPH nitroreductase (nfsA).